We begin with the raw amino-acid sequence, 340 residues long: Protein-tyrosine-phosphatase PTP1 (340 aa).

In terms of domain architecture, Tyrosine-protein phosphatase spans 58-326 (IAHEFTGLQA…FFCYNAIVDE (269 aa)). Substrate is bound by residues Asp234, 265 to 271 (CSAGIGR), and Gln311. Catalysis depends on Cys265, which acts as the Phosphocysteine intermediate.

In terms of assembly, interacts with MPK6. Interacts with KIN10. Phosphorylated by KIN10. Expressed in roots, stems and flowers, and at low levels in leaves.

Its subcellular location is the cytoplasm. The protein localises to the cytosol. The protein resides in the nucleus. The catalysed reaction is O-phospho-L-tyrosyl-[protein] + H2O = L-tyrosyl-[protein] + phosphate. Inhibited by hydrogen peroxide. Functionally, protein-tyrosine-phosphatase that dephosphorylates and probably inhibits MPK6 in non-oxidative stress conditions. In association with MKP1, represses salicylic acid (SA) and camalexin biosynthesis, thus modulating defense response. May also repress MPK3. Dephosphorylates and inactivates MPK4 in vitro. The sequence is that of Protein-tyrosine-phosphatase PTP1 (PTP1) from Arabidopsis thaliana (Mouse-ear cress).